A 330-amino-acid chain; its full sequence is Clavaminate synthase-like protein At3g21360 (330 aa).

Ala2 is subject to N-acetylalanine. Residues His120, Glu122, and His313 each coordinate Fe cation.

The cofactor is Fe cation.

The chain is Clavaminate synthase-like protein At3g21360 from Arabidopsis thaliana (Mouse-ear cress).